We begin with the raw amino-acid sequence, 66 residues long: Beta-toxin Chui4 (66 aa).

Positions 1 to 66 constitute an LCN-type CS-alpha/beta domain; it reads KEGYLVELGT…VWPLKNKTCK (66 aa). 4 disulfides stabilise this stretch: Cys12-Cys65, Cys16-Cys41, Cys25-Cys46, and Cys29-Cys48.

It belongs to the long (4 C-C) scorpion toxin superfamily. Sodium channel inhibitor family. Beta subfamily. Expressed by the venom gland.

The protein resides in the secreted. Its function is as follows. Beta toxins bind voltage-independently at site-4 of sodium channels (Nav) and shift the voltage of activation toward more negative potentials thereby affecting sodium channel activation and promoting spontaneous and repetitive firing. Acts on human sodium channel Nav1.6/SCN8A. Also able to weakly shift the activation curves of human Nav1.2/SCN2A and Nav1.4/SCN4A. This is Beta-toxin Chui4 from Centruroides huichol (Scorpion).